The following is a 425-amino-acid chain: uncharacterized protein (425 aa).

Residues 2–53 (SFNLLDLPIVPRQKALKYLEPIDLFELSLCSKRMAQSVRDLKIEASAHFITL) form the F-box domain.

This is an uncharacterized protein from Caenorhabditis elegans.